A 419-amino-acid chain; its full sequence is Aminoacyltransferase FemB (419 aa).

This sequence belongs to the FemABX family. In terms of assembly, homodimer. Interacts with FemA.

The protein resides in the cytoplasm. It carries out the reaction MurNAc-L-Ala-D-isoglutaminyl-L-Lys-(N(6)-tri-Gly)-D-Ala-D-Ala-diphospho-di-trans,octa-cis-undecaprenyl-GlcNAc + 2 glycyl-tRNA(Gly) = MurNAc-L-Ala-D-isoglutaminyl-L-Lys-(N(6)-penta-Gly)-D-Ala-D-Ala-diphospho-di-trans,octa-cis-undecaprenyl-GlcNAc + 2 tRNA(Gly) + 2 H(+). Catalyzes the formation of the pentaglycine interpeptide bridge, which is characteristic of the S.aureus peptidoglycan. Adds glycines 4 and 5 of the pentaglycine bridge, using glycyl-tRNA(Gly) as donor. Involved in resistance to methicillin. This chain is Aminoacyltransferase FemB (femB), found in Staphylococcus aureus (strain NCTC 8325 / PS 47).